The primary structure comprises 306 residues: Putative NylC-analogous protein (306 aa).

The protein belongs to the peptidase S58 family.

In Agromyces sp. (strain KY5R), this protein is Putative NylC-analogous protein.